The chain runs to 267 residues: Rhomboid-type serine protease 2 (267 aa).

Transmembrane regions (helical) follow at residues Leu20 to Gln40, Phe67 to Leu87, Thr99 to Ile119, Ala126 to Ile146, Phe155 to Ile179, and Leu185 to Ala206. The Nucleophile role is filled by Ser134. His187 is a catalytic residue. The interval Arg247–Pro267 is disordered.

The protein belongs to the peptidase S54 family.

It is found in the golgi apparatus membrane. It localises to the golgi apparatus. Its subcellular location is the cis-Golgi network membrane. It carries out the reaction Cleaves type-1 transmembrane domains using a catalytic dyad composed of serine and histidine that are contributed by different transmembrane domains.. Functionally, probable rhomboid-type serine protease that catalyzes intramembrane proteolysis. This is Rhomboid-type serine protease 2 (RBD2) from Gibberella zeae (strain ATCC MYA-4620 / CBS 123657 / FGSC 9075 / NRRL 31084 / PH-1) (Wheat head blight fungus).